The primary structure comprises 423 residues: Tumor necrosis factor receptor superfamily member 19 (423 aa).

Positions 1–29 (MALKVLLEQEKTFFTLLVLLGYLSCKVTC) are cleaved as a signal peptide. The Extracellular portion of the chain corresponds to 30–170 (ESGDCRQQEF…TASSPRDTAL (141 aa)). TNFR-Cys repeat units follow at residues 33–72 (DCRQQEFRDRSGNCVPCNQCGPGMELSKECGFGYGEDAQC), 74–114 (TCRL…DAIC), and 116–149 (DCLPGFYRKTKLVGFQDMECVPCGDPPPPYEPHC). 8 cysteine pairs are disulfide-bonded: Cys34/Cys46, Cys49/Cys62, Cys52/Cys72, Cys75/Cys89, Cys92/Cys106, Cys95/Cys114, Cys117/Cys135, and Cys138/Cys149. Asn105 carries N-linked (GlcNAc...) asparagine glycosylation. The chain crosses the membrane as a helical span at residues 171 to 191 (AAVICSALATVLLALLILCVI). Over 192–423 (YCKRQFMEKK…LQVRQRLGSL (232 aa)) the chain is Cytoplasmic.

Associates with TRAF1, TRAF2, TRAF3 and TRAF5. Interacts with LINGO1. In terms of tissue distribution, highly expressed in prostate. Detected at lower levels in thymus, spleen, testis, uterus, small intestine, colon and peripheral blood leukocytes.

The protein resides in the membrane. In terms of biological role, can mediate activation of JNK and NF-kappa-B. May promote caspase-independent cell death. This chain is Tumor necrosis factor receptor superfamily member 19 (TNFRSF19), found in Homo sapiens (Human).